Reading from the N-terminus, the 556-residue chain is Formate--tetrahydrofolate ligase (556 aa).

Residue 65–72 coordinates ATP; sequence TPAGEGKS.

The protein belongs to the formate--tetrahydrofolate ligase family.

The catalysed reaction is (6S)-5,6,7,8-tetrahydrofolate + formate + ATP = (6R)-10-formyltetrahydrofolate + ADP + phosphate. Its pathway is one-carbon metabolism; tetrahydrofolate interconversion. The sequence is that of Formate--tetrahydrofolate ligase from Streptococcus equi subsp. zooepidemicus (strain H70).